We begin with the raw amino-acid sequence, 190 residues long: Imidazole glycerol phosphate synthase subunit HisH (190 aa).

The region spanning 2 to 190 (IVGVVDYTVG…IKRFLAVAKR (189 aa)) is the Glutamine amidotransferase type-1 domain. C73 acts as the Nucleophile in catalysis. Active-site residues include H169 and E171.

Heterodimer of HisH and HisF.

Its subcellular location is the cytoplasm. The catalysed reaction is 5-[(5-phospho-1-deoxy-D-ribulos-1-ylimino)methylamino]-1-(5-phospho-beta-D-ribosyl)imidazole-4-carboxamide + L-glutamine = D-erythro-1-(imidazol-4-yl)glycerol 3-phosphate + 5-amino-1-(5-phospho-beta-D-ribosyl)imidazole-4-carboxamide + L-glutamate + H(+). It catalyses the reaction L-glutamine + H2O = L-glutamate + NH4(+). The protein operates within amino-acid biosynthesis; L-histidine biosynthesis; L-histidine from 5-phospho-alpha-D-ribose 1-diphosphate: step 5/9. Its function is as follows. IGPS catalyzes the conversion of PRFAR and glutamine to IGP, AICAR and glutamate. The HisH subunit catalyzes the hydrolysis of glutamine to glutamate and ammonia as part of the synthesis of IGP and AICAR. The resulting ammonia molecule is channeled to the active site of HisF. The polypeptide is Imidazole glycerol phosphate synthase subunit HisH (Pyrobaculum aerophilum (strain ATCC 51768 / DSM 7523 / JCM 9630 / CIP 104966 / NBRC 100827 / IM2)).